A 129-amino-acid chain; its full sequence is UPF0344 protein USA300HOU_0928 (129 aa).

4 helical membrane passes run 1–21 (MLHL…ATYL), 36–56 (LHMI…WILI), 67–87 (MLLT…EVSI), and 99–119 (MFWI…ILPL).

The protein belongs to the UPF0344 family.

The protein localises to the cell membrane. This chain is UPF0344 protein USA300HOU_0928, found in Staphylococcus aureus (strain USA300 / TCH1516).